The primary structure comprises 302 residues: Ornithine carbamoyltransferase (302 aa).

Residues 52-55 (STRT), Gln79, Arg103, and 130-133 (HPCQ) contribute to the carbamoyl phosphate site. L-ornithine-binding positions include Asn161, Asp222, and 226–227 (SM). Carbamoyl phosphate contacts are provided by residues 262–263 (CL) and Arg290.

The protein belongs to the aspartate/ornithine carbamoyltransferase superfamily. OTCase family.

It localises to the cytoplasm. It catalyses the reaction carbamoyl phosphate + L-ornithine = L-citrulline + phosphate + H(+). It participates in amino-acid biosynthesis; L-arginine biosynthesis; L-arginine from L-ornithine and carbamoyl phosphate: step 1/3. Reversibly catalyzes the transfer of the carbamoyl group from carbamoyl phosphate (CP) to the N(epsilon) atom of ornithine (ORN) to produce L-citrulline. The polypeptide is Ornithine carbamoyltransferase (Syntrophus aciditrophicus (strain SB)).